The sequence spans 156 residues: MRNSSKQEDLIKAFKALLKEEKFSSQGEIVNALQEEGFENINQSKVSRMLTKFGAVRTRNAKMEMVYCLPAELGVPTTTSPLKNLVLDIDFNDALVVIHTSPGAAQLIARLLDSLGKAEGILGTIAGDDTIFITPARSFTVKQLHDAILVLFEQEL.

It belongs to the ArgR family.

Its subcellular location is the cytoplasm. It functions in the pathway amino-acid biosynthesis; L-arginine biosynthesis [regulation]. Regulates arginine biosynthesis genes. In Erwinia tasmaniensis (strain DSM 17950 / CFBP 7177 / CIP 109463 / NCPPB 4357 / Et1/99), this protein is Arginine repressor.